The following is a 145-amino-acid chain: Basic phospholipase A2 cL037 (145 aa).

Positions 1 to 21 are cleaved as a signal peptide; the sequence is MYPAHLLVLLAVCVSLLGASA. The propeptide occupies 22-27; sequence ILPLPL. Intrachain disulfides connect C38/C98, C54/C144, C56/C72, C71/C125, C78/C118, C87/C111, and C105/C116. Residues Y55, G57, and G59 each coordinate Ca(2+). Residue H75 is part of the active site. Position 76 (D76) interacts with Ca(2+). Residue D119 is part of the active site.

The protein belongs to the phospholipase A2 family. Group I subfamily. D49 sub-subfamily. It depends on Ca(2+) as a cofactor. Expressed by the venom gland.

It localises to the secreted. It catalyses the reaction a 1,2-diacyl-sn-glycero-3-phosphocholine + H2O = a 1-acyl-sn-glycero-3-phosphocholine + a fatty acid + H(+). In terms of biological role, PLA2 catalyzes the calcium-dependent hydrolysis of the 2-acyl groups in 3-sn-phosphoglycerides. This chain is Basic phospholipase A2 cL037, found in Laticauda semifasciata (Black-banded sea krait).